The chain runs to 313 residues: Formimidoylglutamase (313 aa).

Mn(2+) is bound by residues histidine 130, aspartate 155, histidine 157, aspartate 159, aspartate 241, and aspartate 243.

This sequence belongs to the arginase family. It depends on Mn(2+) as a cofactor.

It catalyses the reaction N-formimidoyl-L-glutamate + H2O = formamide + L-glutamate. It participates in amino-acid degradation; L-histidine degradation into L-glutamate; L-glutamate from N-formimidoyl-L-glutamate (hydrolase route): step 1/1. Functionally, catalyzes the conversion of N-formimidoyl-L-glutamate to L-glutamate and formamide. The sequence is that of Formimidoylglutamase from Salmonella agona (strain SL483).